Here is a 120-residue protein sequence, read N- to C-terminus: UPF0102 protein CbuK_0265 (120 aa).

Belongs to the UPF0102 family.

This Coxiella burnetii (strain CbuK_Q154) (Coxiella burnetii (strain Q154)) protein is UPF0102 protein CbuK_0265.